Here is a 1097-residue protein sequence, read N- to C-terminus: DNA-directed RNA polymerase subunit beta (1097 aa).

Positions 1072 to 1097 (QDVNPRRSTPSRPTYESLGVADYDED) are disordered.

This sequence belongs to the RNA polymerase beta chain family. In terms of assembly, in cyanobacteria the RNAP catalytic core is composed of 2 alpha, 1 beta, 1 beta', 1 gamma and 1 omega subunit. When a sigma factor is associated with the core the holoenzyme is formed, which can initiate transcription.

It catalyses the reaction RNA(n) + a ribonucleoside 5'-triphosphate = RNA(n+1) + diphosphate. DNA-dependent RNA polymerase catalyzes the transcription of DNA into RNA using the four ribonucleoside triphosphates as substrates. In Prochlorococcus marinus (strain MIT 9303), this protein is DNA-directed RNA polymerase subunit beta.